A 533-amino-acid chain; its full sequence is Probable polyamine oxidase 5 (533 aa).

The FAD site is built by Glu-37, Arg-45, Val-262, and Glu-501.

It belongs to the flavin monoamine oxidase family. FAD is required as a cofactor. As to expression, expressed in root vasculature, leaves and stems.

It localises to the cytoplasm. The enzyme catalyses spermine + O2 + H2O = 3-aminopropanal + spermidine + H2O2. It carries out the reaction N(1)-acetylspermine + O2 + H2O = 3-acetamidopropanal + spermidine + H2O2. It catalyses the reaction norspermine + O2 + H2O = norspermidine + 3-aminopropanal + H2O2. The catalysed reaction is thermospermine + O2 + H2O = 3-aminopropanal + spermidine + H2O2. The protein operates within amine and polyamine degradation; spermine degradation. Functionally, flavoenzyme involved in polyamine back-conversion. Catalyzes the oxidation of the secondary amino group of polyamines, such as spermine and its acetyl derivatives. Substrate preference is spermine &gt; N(1)-acetylspermine &gt; thermospermine &gt; norspermine. Plays an important role in the regulation of polyamine intracellular concentration. Involved in xylem differentiation by controlling thermospermine homeostasis, and participating in the tightly controlled interplay between auxin and cytokinin that is necessary for proper xylem differentiation. Involved in the production of hydrogen peroxide in response to salt and cold stresses. The sequence is that of Probable polyamine oxidase 5 from Arabidopsis thaliana (Mouse-ear cress).